The chain runs to 379 residues: Probable protein arginine N-methyltransferase 6.1 (379 aa).

Residues 1-35 (MLPSHLNGHSPLARRRPRLSAASPPATGDSDAAAA) form a disordered region. Over residues 19–35 (LSAASPPATGDSDAAAA) the composition is skewed to low complexity. An SAM-dependent MTase PRMT-type domain is found at 45-379 (DRIYFQSYSH…FLNIQLDCTM (335 aa)). 5 residues coordinate S-adenosyl-L-methionine: histidine 58, arginine 67, glycine 91, glutamate 113, and glutamate 142. Catalysis depends on residues glutamate 156 and glutamate 165.

This sequence belongs to the class I-like SAM-binding methyltransferase superfamily. Protein arginine N-methyltransferase family. PRMT6 subfamily.

Arginine methyltransferase that can both catalyze the formation of omega-N monomethylarginine (MMA) and asymmetrical dimethylarginine (aDMA). The polypeptide is Probable protein arginine N-methyltransferase 6.1 (PRMT6.1) (Oryza sativa subsp. indica (Rice)).